The following is a 481-amino-acid chain: Molybdate-anion transporter (481 aa).

The next 12 helical transmembrane spans lie at 1–21 (MFVTAYLAFIVLAGLCVALEI), 47–67 (LFLKAYLLALWADWLQGPYLY), 80–100 (IAILYVCGLASCVLFAPVAGW), 131–151 (FMLILGRVLGGLSTSLLTTTF), 180–200 (WNYGLAVGAGLVANLFAEWLG), 201–221 (LGPVAPFLLAIPSLAACAWFV), 276–296 (VMLLGGVQALFESVLYIFVFL), 306–326 (PPLGIVFSSLMAATMAGSTLF), 341–361 (LLCLAILLAFFSFFMLTFSTV), 371–391 (LLAFLLLELACGLYFPAVSFL), 403–423 (AVLAWFRLPLHLLACLGLLAL), and 443–463 (FAGCAGMMLAALLAVISLFTV).

The protein belongs to the major facilitator superfamily.

It localises to the cell membrane. Its function is as follows. Mediates high-affinity intracellular uptake of the rare oligo-element molybdenum. This Danio rerio (Zebrafish) protein is Molybdate-anion transporter (mfsd5).